A 263-amino-acid chain; its full sequence is TPR repeat-containing protein DDB_G0285095 (263 aa).

Residues 1-25 (MGCCGSKEKYNGEDVPKSQRLENRP) are compositionally biased toward basic and acidic residues. A disordered region spans residues 1 to 62 (MGCCGSKEKY…ASASQQNNPT (62 aa)). TPR repeat units lie at residues 87 to 120 (SDLL…DTDN), 121 to 154 (SRAW…AAPK), and 162 to 195 (SSLL…GARS).

In Dictyostelium discoideum (Social amoeba), this protein is TPR repeat-containing protein DDB_G0285095.